The primary structure comprises 199 residues: MQLKRVAEAKLPTFWGDFLIIGFKENQTEHNHIALTYGDLTGSNPVLTRIHSECLTGDALFSSRCDCGIQLSTALRYITEEGQGILIYHRQEGRNIGLLNKIRAYSLQDHGADTVEANQCLGFNADERDFTVCADILKLLNIQTIRLLTNNPQKIEILNKSHIIVTERVPLIVGRNPKNSKYLDTKALKLGHLFSSYYK.

49–53 (RIHSE) is a GTP binding site. C54, C65, and C67 together coordinate Zn(2+). Residues Q70, 92-94 (EGR), and T114 contribute to the GTP site. Catalysis depends on D126, which acts as the Proton acceptor. The active-site Nucleophile is R128. GTP contacts are provided by T149 and K154.

Belongs to the GTP cyclohydrolase II family. In terms of assembly, homodimer. Requires Zn(2+) as cofactor.

It catalyses the reaction GTP + 4 H2O = 2,5-diamino-6-hydroxy-4-(5-phosphoribosylamino)-pyrimidine + formate + 2 phosphate + 3 H(+). The protein operates within cofactor biosynthesis; riboflavin biosynthesis; 5-amino-6-(D-ribitylamino)uracil from GTP: step 1/4. Catalyzes the conversion of GTP to 2,5-diamino-6-ribosylamino-4(3H)-pyrimidinone 5'-phosphate (DARP), formate and pyrophosphate. In Blochmanniella floridana, this protein is GTP cyclohydrolase-2.